Here is a 286-residue protein sequence, read N- to C-terminus: MTQLSLKKIYSGKVRDLYEIDDKRMLMVATDRLSAFDVILDDPIPRKGEILTQISNFWFNQLAHIMPNHFTGDTVYDVLPKEEADKVKDRAVVCKRLTPIKIESIVRGYLTGSGLKDYQKTGTICGLALPEGLVEASKLPEPIFTPSSKAEVGDHDVNISYAECEQLIGPELAAQVKEKAIALYQAAAEYALSKGIIICDTKFEFGLDENGTLTLMDEVLTPDSSRFWSVETYREGINPPSFDKQFIRDWLETSGWNKQPPAPKVPAEVIEKTVNKYQEALDLLTK.

It belongs to the SAICAR synthetase family.

The enzyme catalyses 5-amino-1-(5-phospho-D-ribosyl)imidazole-4-carboxylate + L-aspartate + ATP = (2S)-2-[5-amino-1-(5-phospho-beta-D-ribosyl)imidazole-4-carboxamido]succinate + ADP + phosphate + 2 H(+). Its pathway is purine metabolism; IMP biosynthesis via de novo pathway; 5-amino-1-(5-phospho-D-ribosyl)imidazole-4-carboxamide from 5-amino-1-(5-phospho-D-ribosyl)imidazole-4-carboxylate: step 1/2. The polypeptide is Phosphoribosylaminoimidazole-succinocarboxamide synthase (purC) (Pasteurella multocida (strain Pm70)).